A 418-amino-acid chain; its full sequence is Zinc finger protein 566 (418 aa).

Residues 6–77 (VMFSDVSVDF…DRELTRGQWP (72 aa)) enclose the KRAB domain. Residues 169-193 (KFCASKEYRKTFRHGSQFATHEIIH) form a C2H2-type 1; degenerate zinc finger. C2H2-type zinc fingers lie at residues 199–221 (YECK…QKIH), 227–249 (FECK…HRIH), 255–277 (YECK…QRIH), 283–305 (YECK…QRIH), 311–333 (YECK…QRIH), 339–361 (YECK…QRIH), and 367–389 (YECK…HRIH). Glycyl lysine isopeptide (Lys-Gly) (interchain with G-Cter in SUMO2) cross-links involve residues K314 and K328.

This sequence belongs to the krueppel C2H2-type zinc-finger protein family.

The protein resides in the nucleus. Functionally, may be involved in transcriptional regulation. In Pan troglodytes (Chimpanzee), this protein is Zinc finger protein 566 (ZNF566).